The chain runs to 188 residues: Peptidyl-tRNA hydrolase (188 aa).

Tyr14 provides a ligand contact to tRNA. Residue His19 is the Proton acceptor of the active site. 3 residues coordinate tRNA: Tyr64, Asn66, and Asn112.

The protein belongs to the PTH family. As to quaternary structure, monomer.

The protein resides in the cytoplasm. It carries out the reaction an N-acyl-L-alpha-aminoacyl-tRNA + H2O = an N-acyl-L-amino acid + a tRNA + H(+). Its function is as follows. Hydrolyzes ribosome-free peptidyl-tRNAs (with 1 or more amino acids incorporated), which drop off the ribosome during protein synthesis, or as a result of ribosome stalling. Functionally, catalyzes the release of premature peptidyl moieties from peptidyl-tRNA molecules trapped in stalled 50S ribosomal subunits, and thus maintains levels of free tRNAs and 50S ribosomes. This chain is Peptidyl-tRNA hydrolase, found in Bacillus velezensis (strain DSM 23117 / BGSC 10A6 / LMG 26770 / FZB42) (Bacillus amyloliquefaciens subsp. plantarum).